Here is a 288-residue protein sequence, read N- to C-terminus: Phenazine biosynthesis-like domain-containing protein 2 (288 aa).

Glu46 is a catalytic residue.

It belongs to the PhzF family.

This chain is Phenazine biosynthesis-like domain-containing protein 2 (Pbld2), found in Mus musculus (Mouse).